A 31-amino-acid polypeptide reads, in one-letter code: Cytochrome b6-f complex subunit 6 (31 aa).

A helical membrane pass occupies residues 4–24 (LLSYFGLLLAALISTLVLFIG).

Belongs to the PetL family. The 4 large subunits of the cytochrome b6-f complex are cytochrome b6, subunit IV (17 kDa polypeptide, PetD), cytochrome f and the Rieske protein, while the 4 small subunits are PetG, PetL, PetM and PetN. The complex functions as a dimer.

The protein localises to the plastid. It is found in the chloroplast thylakoid membrane. In terms of biological role, component of the cytochrome b6-f complex, which mediates electron transfer between photosystem II (PSII) and photosystem I (PSI), cyclic electron flow around PSI, and state transitions. PetL is important for photoautotrophic growth as well as for electron transfer efficiency and stability of the cytochrome b6-f complex. This chain is Cytochrome b6-f complex subunit 6, found in Psilotum nudum (Whisk fern).